Here is a 326-residue protein sequence, read N- to C-terminus: Aspartate--ammonia ligase (326 aa).

This sequence belongs to the class-II aminoacyl-tRNA synthetase family. AsnA subfamily.

The protein localises to the cytoplasm. The catalysed reaction is L-aspartate + NH4(+) + ATP = L-asparagine + AMP + diphosphate + H(+). It participates in amino-acid biosynthesis; L-asparagine biosynthesis; L-asparagine from L-aspartate (ammonia route): step 1/1. This Malacoplasma penetrans (strain HF-2) (Mycoplasma penetrans) protein is Aspartate--ammonia ligase.